Reading from the N-terminus, the 841-residue chain is Envelope glycoprotein H (841 aa).

The N-terminal stretch at 1–17 is a signal peptide; sequence MFALVLAVVILPLWTTA. Asn-18, Asn-45, and Asn-217 each carry an N-linked (GlcNAc...) asparagine; by host glycan. Over 18 to 802 the chain is Virion surface; it reads NKSYVTPTPA…ERRQAIRMSG (785 aa). The interval 246 to 309 is interaction with gL; sequence DSGRVEVNIG…DPGPSYRVYL (64 aa). N-linked (GlcNAc...) asparagine; by host glycans are attached at residues Asn-317, Asn-499, Asn-522, Asn-760, and Asn-783. The helical transmembrane segment at 803–823 threads the bilayer; the sequence is QYLGASLGGAFLAVVGFGIIG. Over 824-841 the chain is Intravirion; the sequence is WMLCGNSRLREYNKIPLT.

This sequence belongs to the herpesviridae glycoprotein H family. Interacts with glycoprotein L (gL); this interaction is necessary for the correct processing and cell surface expression of gH. The heterodimer gH/gL seems to interact with gB trimers during fusion. Post-translationally, N-glycosylated, O-glycosylated, and sialylated.

It localises to the virion membrane. Its subcellular location is the host cell membrane. The protein resides in the host endosome membrane. The heterodimer glycoprotein H-glycoprotein L is required for the fusion of viral and plasma membranes leading to virus entry into the host cell. Following initial binding to host receptor, membrane fusion is mediated by the fusion machinery composed of gB and the heterodimer gH/gL. May also be involved in the fusion between the virion envelope and the outer nuclear membrane during virion morphogenesis. The protein is Envelope glycoprotein H of Varicella-zoster virus (strain Oka vaccine) (HHV-3).